Reading from the N-terminus, the 276-residue chain is Eukaryotic translation initiation factor 3 subunit G-2 (276 aa).

Positions 196–274 (SAVRISNLSE…LILCVEWSKP (79 aa)) constitute an RRM domain.

It belongs to the eIF-3 subunit G family. In terms of assembly, component of the eukaryotic translation initiation factor 3 (eIF-3) complex. The eIF-3 complex interacts with pix.

The protein resides in the cytoplasm. RNA-binding component of the eukaryotic translation initiation factor 3 (eIF-3) complex, which is involved in protein synthesis of a specialized repertoire of mRNAs and, together with other initiation factors, stimulates binding of mRNA and methionyl-tRNAi to the 40S ribosome. The eIF-3 complex specifically targets and initiates translation of a subset of mRNAs involved in cell proliferation. This subunit can bind 18S rRNA. The protein is Eukaryotic translation initiation factor 3 subunit G-2 of Drosophila persimilis (Fruit fly).